We begin with the raw amino-acid sequence, 428 residues long: Dihydroorotase (428 aa).

Zn(2+) contacts are provided by His-59 and His-61. Residues 61-63 (HLR) and Asn-93 contribute to the substrate site. Positions 151, 178, and 231 each coordinate Zn(2+). Asn-277 is a binding site for substrate. Asp-304 is a binding site for Zn(2+). The active site involves Asp-304. Residues His-308 and 322-323 (FG) each bind substrate.

It belongs to the metallo-dependent hydrolases superfamily. DHOase family. Class I DHOase subfamily. Requires Zn(2+) as cofactor.

It catalyses the reaction (S)-dihydroorotate + H2O = N-carbamoyl-L-aspartate + H(+). It participates in pyrimidine metabolism; UMP biosynthesis via de novo pathway; (S)-dihydroorotate from bicarbonate: step 3/3. Catalyzes the reversible cyclization of carbamoyl aspartate to dihydroorotate. This chain is Dihydroorotase, found in Halalkalibacterium halodurans (strain ATCC BAA-125 / DSM 18197 / FERM 7344 / JCM 9153 / C-125) (Bacillus halodurans).